A 671-amino-acid chain; its full sequence is DNA ligase (671 aa).

NAD(+) contacts are provided by residues 32–36, 81–82, and Glu113; these read DAEYD and SL. Lys115 (N6-AMP-lysine intermediate) is an active-site residue. NAD(+) is bound by residues Arg136, Glu173, Lys290, and Lys314. 4 residues coordinate Zn(2+): Cys408, Cys411, Cys426, and Cys432. Residues 593-671 enclose the BRCT domain; it reads EIDSPFAGKT…EAEMIRLLDA (79 aa).

This sequence belongs to the NAD-dependent DNA ligase family. LigA subfamily. The cofactor is Mg(2+). It depends on Mn(2+) as a cofactor.

The enzyme catalyses NAD(+) + (deoxyribonucleotide)n-3'-hydroxyl + 5'-phospho-(deoxyribonucleotide)m = (deoxyribonucleotide)n+m + AMP + beta-nicotinamide D-nucleotide.. Functionally, DNA ligase that catalyzes the formation of phosphodiester linkages between 5'-phosphoryl and 3'-hydroxyl groups in double-stranded DNA using NAD as a coenzyme and as the energy source for the reaction. It is essential for DNA replication and repair of damaged DNA. The sequence is that of DNA ligase from Salmonella schwarzengrund (strain CVM19633).